The following is a 128-amino-acid chain: Ribonuclease P protein component (128 aa).

Belongs to the RnpA family. In terms of assembly, consists of a catalytic RNA component (M1 or rnpB) and a protein subunit.

The catalysed reaction is Endonucleolytic cleavage of RNA, removing 5'-extranucleotides from tRNA precursor.. RNaseP catalyzes the removal of the 5'-leader sequence from pre-tRNA to produce the mature 5'-terminus. It can also cleave other RNA substrates such as 4.5S RNA. The protein component plays an auxiliary but essential role in vivo by binding to the 5'-leader sequence and broadening the substrate specificity of the ribozyme. This chain is Ribonuclease P protein component, found in Prochlorococcus marinus (strain AS9601).